Reading from the N-terminus, the 216-residue chain is Protein GrpE (216 aa).

Disordered stretches follow at residues 1–45 and 185–216; these read MTEE…LDPT and RVAVAEPQPGATPAAAKEEKTDDEESGGTEEV. Acidic residues predominate over residues 205–216; sequence TDDEESGGTEEV.

It belongs to the GrpE family. In terms of assembly, homodimer.

It localises to the cytoplasm. Participates actively in the response to hyperosmotic and heat shock by preventing the aggregation of stress-denatured proteins, in association with DnaK and GrpE. It is the nucleotide exchange factor for DnaK and may function as a thermosensor. Unfolded proteins bind initially to DnaJ; upon interaction with the DnaJ-bound protein, DnaK hydrolyzes its bound ATP, resulting in the formation of a stable complex. GrpE releases ADP from DnaK; ATP binding to DnaK triggers the release of the substrate protein, thus completing the reaction cycle. Several rounds of ATP-dependent interactions between DnaJ, DnaK and GrpE are required for fully efficient folding. The polypeptide is Protein GrpE (Streptomyces griseus subsp. griseus (strain JCM 4626 / CBS 651.72 / NBRC 13350 / KCC S-0626 / ISP 5235)).